A 162-amino-acid polypeptide reads, in one-letter code: NADH-quinone oxidoreductase subunit I (162 aa).

2 4Fe-4S ferredoxin-type domains span residues 52–82 (LRRY…IEAG) and 93–122 (VRYD…EGPN). [4Fe-4S] cluster is bound by residues C62, C65, C68, C72, C102, C105, C108, and C112.

It belongs to the complex I 23 kDa subunit family. In terms of assembly, NDH-1 is composed of 14 different subunits. Subunits NuoA, H, J, K, L, M, N constitute the membrane sector of the complex. It depends on [4Fe-4S] cluster as a cofactor.

The protein resides in the cell inner membrane. The catalysed reaction is a quinone + NADH + 5 H(+)(in) = a quinol + NAD(+) + 4 H(+)(out). Functionally, NDH-1 shuttles electrons from NADH, via FMN and iron-sulfur (Fe-S) centers, to quinones in the respiratory chain. The immediate electron acceptor for the enzyme in this species is believed to be ubiquinone. Couples the redox reaction to proton translocation (for every two electrons transferred, four hydrogen ions are translocated across the cytoplasmic membrane), and thus conserves the redox energy in a proton gradient. The chain is NADH-quinone oxidoreductase subunit I from Nitrobacter winogradskyi (strain ATCC 25391 / DSM 10237 / CIP 104748 / NCIMB 11846 / Nb-255).